The chain runs to 709 residues: Elongation factor G (709 aa).

The 283-residue stretch at 8–290 (NRYRNIGISA…AVIQYMPAPQ (283 aa)) folds into the tr-type G domain. GTP is bound by residues 17-24 (AHIDAGKT), 88-92 (DTPGH), and 142-145 (NKMD).

This sequence belongs to the TRAFAC class translation factor GTPase superfamily. Classic translation factor GTPase family. EF-G/EF-2 subfamily.

Its subcellular location is the cytoplasm. In terms of biological role, catalyzes the GTP-dependent ribosomal translocation step during translation elongation. During this step, the ribosome changes from the pre-translocational (PRE) to the post-translocational (POST) state as the newly formed A-site-bound peptidyl-tRNA and P-site-bound deacylated tRNA move to the P and E sites, respectively. Catalyzes the coordinated movement of the two tRNA molecules, the mRNA and conformational changes in the ribosome. The sequence is that of Elongation factor G from Psychrobacter sp. (strain PRwf-1).